The following is a 122-amino-acid chain: Large ribosomal subunit protein uL14 (122 aa).

Belongs to the universal ribosomal protein uL14 family. In terms of assembly, part of the 50S ribosomal subunit. Forms a cluster with proteins L3 and L19. In the 70S ribosome, L14 and L19 interact and together make contacts with the 16S rRNA in bridges B5 and B8.

Binds to 23S rRNA. Forms part of two intersubunit bridges in the 70S ribosome. The polypeptide is Large ribosomal subunit protein uL14 (Leifsonia xyli subsp. xyli (strain CTCB07)).